A 264-amino-acid polypeptide reads, in one-letter code: Indole-3-glycerol phosphate synthase (264 aa).

This sequence belongs to the TrpC family.

It carries out the reaction 1-(2-carboxyphenylamino)-1-deoxy-D-ribulose 5-phosphate + H(+) = (1S,2R)-1-C-(indol-3-yl)glycerol 3-phosphate + CO2 + H2O. The protein operates within amino-acid biosynthesis; L-tryptophan biosynthesis; L-tryptophan from chorismate: step 4/5. This chain is Indole-3-glycerol phosphate synthase, found in Carboxydothermus hydrogenoformans (strain ATCC BAA-161 / DSM 6008 / Z-2901).